The sequence spans 590 residues: DNA primase (590 aa).

The CHC2-type zinc finger occupies 37-61; the sequence is CPFHKEKTPSFSVSPTKQFYHCFSC. The region spanning 255–337 is the Toprim domain; it reads GRILVVEGYM…DKSLHFLFLP (83 aa). The Mg(2+) site is built by Glu-261, Asp-305, and Asp-307.

Belongs to the DnaG primase family. Monomer. Interacts with DnaB. The cofactor is Zn(2+). It depends on Mg(2+) as a cofactor.

The catalysed reaction is ssDNA + n NTP = ssDNA/pppN(pN)n-1 hybrid + (n-1) diphosphate.. In terms of biological role, RNA polymerase that catalyzes the synthesis of short RNA molecules used as primers for DNA polymerase during DNA replication. The sequence is that of DNA primase from Neisseria meningitidis serogroup A / serotype 4A (strain DSM 15465 / Z2491).